The sequence spans 2104 residues: Transmembrane matrix receptor MUP-4 (2104 aa).

A signal peptide spans methionine 1–alanine 15. The Extracellular portion of the chain corresponds to alanine 16 to proline 1860. EGF-like domains lie at valine 71–aspartate 110, threonine 122–serine 163, and serine 175–asparagine 213. 6 disulfides stabilise this stretch: cysteine 75-cysteine 89, cysteine 83-cysteine 98, cysteine 126-cysteine 142, cysteine 136-cysteine 151, cysteine 179-cysteine 192, and cysteine 186-cysteine 201. The WR1 domain maps to arginine 220–arginine 265. 3 consecutive EGF-like domains span residues valine 278–aspartate 315, valine 327–isoleucine 360, and alanine 377–asparagine 416. 7 disulfides stabilise this stretch: cysteine 282/cysteine 294, cysteine 288/cysteine 303, cysteine 331/cysteine 344, cysteine 338/cysteine 353, cysteine 355/cysteine 359, cysteine 381/cysteine 395, and cysteine 389/cysteine 404. Residues aspartate 437–isoleucine 612 form the VWFA domain. Asparagine 494 and asparagine 556 each carry an N-linked (GlcNAc...) asparagine glycan. EGF-like domains are found at residues serine 728–glutamate 772 and leucine 819–glutamate 857. 21 cysteine pairs are disulfide-bonded: cysteine 732–cysteine 746, cysteine 740–cysteine 756, cysteine 758–cysteine 771, cysteine 823–cysteine 836, cysteine 830–cysteine 845, cysteine 873–cysteine 886, cysteine 880–cysteine 895, cysteine 923–cysteine 937, cysteine 931–cysteine 946, cysteine 972–cysteine 985, cysteine 979–cysteine 995, cysteine 1020–cysteine 1034, cysteine 1028–cysteine 1046, cysteine 1075–cysteine 1089, cysteine 1083–cysteine 1098, cysteine 1125–cysteine 1139, cysteine 1133–cysteine 1148, cysteine 1173–cysteine 1187, cysteine 1181–cysteine 1196, cysteine 1219–cysteine 1233, and cysteine 1227–cysteine 1242. The 39-residue stretch at glutamine 869 to asparagine 907 folds into the EGF-like 9; calcium-binding domain. An N-linked (GlcNAc...) asparagine glycan is attached at asparagine 879. EGF-like domains are found at residues leucine 919–leucine 958, leucine 968–leucine 1007, valine 1016–valine 1058, leucine 1071–valine 1110, leucine 1121–glutamate 1160, isoleucine 1169–serine 1208, and arginine 1215–aspartate 1254. A glycan (N-linked (GlcNAc...) asparagine) is linked at asparagine 1037. The N-linked (GlcNAc...) asparagine glycan is linked to asparagine 1132. Residues asparagine 1271, asparagine 1403, and asparagine 1576 are each glycosylated (N-linked (GlcNAc...) asparagine). SEA domains lie at proline 1322 to aspartate 1444 and alanine 1495 to leucine 1620. EGF-like domains follow at residues proline 1622 to serine 1658, glycine 1669 to serine 1705, and serine 1717 to serine 1754. Intrachain disulfides connect cysteine 1626–cysteine 1637, cysteine 1631–cysteine 1646, cysteine 1673–cysteine 1687, cysteine 1681–cysteine 1696, cysteine 1721–cysteine 1733, cysteine 1727–cysteine 1742, cysteine 1776–cysteine 1789, cysteine 1783–cysteine 1798, cysteine 1821–cysteine 1830, cysteine 1824–cysteine 1841, and cysteine 1843–cysteine 1852. Residues asparagine 1730 and asparagine 1782 are each glycosylated (N-linked (GlcNAc...) asparagine). One can recognise an EGF-like 20; calcium-binding domain in the interval aspartate 1772 to serine 1810. The 37-residue stretch at alanine 1817 to glutamate 1853 folds into the EGF-like 21 domain. Asparagine 1838 carries N-linked (GlcNAc...) asparagine glycosylation. The helical transmembrane segment at leucine 1861 to tyrosine 1881 threads the bilayer. The Cytoplasmic portion of the chain corresponds to methionine 1882 to phenylalanine 2104. Residues serine 2031–glycine 2040 show a composition bias toward low complexity. The segment at serine 2031–phenylalanine 2104 is disordered. 2 stretches are compositionally biased toward basic and acidic residues: residues valine 2062–glutamate 2076 and threonine 2083–phenylalanine 2104.

Abundant at hypodermal cell-matrix junctions overlying muscle of threefold embryos. Expression continues in body wall muscle in larvae and adults and is also detected in other regions where cells show mechanical attachment to the hypodermis including the inner surface of the pharynx, overlying anal and intestinal muscles, overlying vulval and uterine sex muscles, male tail muscle attachment zones and the six mechanosensory neurons (at protein level).

It is found in the cell junction. It localises to the hemidesmosome. Its subcellular location is the cytoplasm. The protein resides in the cytoskeleton. The protein localises to the cell membrane. Required for junctional attachments between hypodermis and muscle, and between the apical epithelial surface and the cuticular matrix. Essential for enclosure of the embryo by the hypodermis, hypodermal integrity, embryo elongation, and maintenance of hypodermal morphology in fully elongated embryos. This chain is Transmembrane matrix receptor MUP-4, found in Caenorhabditis elegans.